The chain runs to 288 residues: Quinate/shikimate dehydrogenase (288 aa).

Positions 71 and 107 each coordinate substrate. Residues 132–135 (AGGA), 155–158 (NRRD), K205, 232–235 (CVYN), and G255 contribute to the NAD(+) site.

It belongs to the shikimate dehydrogenase family. As to quaternary structure, homodimer.

The catalysed reaction is L-quinate + NAD(+) = 3-dehydroquinate + NADH + H(+). The enzyme catalyses L-quinate + NADP(+) = 3-dehydroquinate + NADPH + H(+). It carries out the reaction shikimate + NADP(+) = 3-dehydroshikimate + NADPH + H(+). It catalyses the reaction shikimate + NAD(+) = 3-dehydroshikimate + NADH + H(+). It functions in the pathway metabolic intermediate biosynthesis; chorismate biosynthesis; chorismate from D-erythrose 4-phosphate and phosphoenolpyruvate: step 4/7. Functionally, the actual biological function of YdiB remains unclear, nor is it known whether 3-dehydroshikimate or quinate represents the natural substrate. Catalyzes the reversible NAD-dependent reduction of both 3-dehydroshikimate (DHSA) and 3-dehydroquinate to yield shikimate (SA) and quinate, respectively. It can use both NAD or NADP for catalysis, however it has higher catalytic efficiency with NAD. This chain is Quinate/shikimate dehydrogenase, found in Escherichia coli (strain 55989 / EAEC).